A 531-amino-acid chain; its full sequence is UDP-glucuronosyltransferase 1A6 (531 aa).

The first 26 residues, Met-1–Gly-26, serve as a signal peptide directing secretion. A glycan (N-linked (GlcNAc...) asparagine) is linked at Asn-294. A helical transmembrane segment spans residues Val-489–Phe-505.

Belongs to the UDP-glycosyltransferase family.

It is found in the microsome. The protein resides in the endoplasmic reticulum membrane. It catalyses the reaction glucuronate acceptor + UDP-alpha-D-glucuronate = acceptor beta-D-glucuronoside + UDP + H(+). The enzyme catalyses (5Z,8Z,11Z,14Z)-eicosatetraenoate + UDP-alpha-D-glucuronate = O-[(5Z),(8Z),(11Z),(14Z)-eicosatetraenoyl]-beta-D-glucuronate + UDP. The catalysed reaction is 15-hydroxy-(5Z,8Z,11Z,13E)-eicosatetraenoate + UDP-alpha-D-glucuronate = 15-O-(beta-D-glucuronosyl)-(5Z,8Z,11Z,14Z)-eicosatetraenoate + UDP + H(+). It carries out the reaction (E)-ferulate + UDP-alpha-D-glucuronate = (E)-4-O-(beta-D-glucuronosyl)-ferulate + UDP + H(+). It catalyses the reaction (E)-ferulate + UDP-alpha-D-glucuronate = (E)-ferulic acid beta-D-glucuronate ester + UDP. In terms of biological role, UDP-glucuronosyltransferase (UGT) that catalyzes phase II biotransformation reactions in which lipophilic substrates are conjugated with glucuronic acid to facilitate their inactivation and excretion from the body. Essential for the elimination and detoxification of drugs, xenobiotics and endogenous compounds. Involved in the glucuronidation of arachidonic acid (AA) and AA-derived eicosanoids including 15-HETE and 20-HETE. Conjugates small planar phenolic molecules such as 4-nitrophenol, 1-naphthol, and 4-methylumbelliferone. The bulky phenol 4-hydroxybiphenyl, androgens and estrogens are not substrates. 2-hydroxybiphenyl is an excellent substrate. Involved in the glucuronidation of the phytochemical ferulic acid at the phenolic or the carboxylic acid group. The sequence is that of UDP-glucuronosyltransferase 1A6 (UGT1) from Oryctolagus cuniculus (Rabbit).